The chain runs to 650 residues: ATP-dependent zinc metalloprotease FtsH (650 aa).

The Cytoplasmic segment spans residues 1–10 (MKTKKSKSTL). Residues 11–31 (WFWLIILLAIIVTIIIIAVTV) form a helical membrane-spanning segment. Residues 32 to 123 (KGTTQVISDA…LVYQGSVGMA (92 aa)) lie on the Extracellular side of the membrane. The helical transmembrane segment at 124 to 144 (LLVSLAPLLIYVLLFGGIIWF) threads the bilayer. Residues 145-650 (MMKSSSGAGA…DIKVEDLDID (506 aa)) lie on the Cytoplasmic side of the membrane. 217 to 224 (GPPGTGKT) contacts ATP. Residue His-437 participates in Zn(2+) binding. The active site involves Glu-438. Residues His-441 and Asp-515 each coordinate Zn(2+).

In the central section; belongs to the AAA ATPase family. This sequence in the C-terminal section; belongs to the peptidase M41 family. As to quaternary structure, homohexamer. Requires Zn(2+) as cofactor.

The protein localises to the cell membrane. Its function is as follows. Acts as a processive, ATP-dependent zinc metallopeptidase for both cytoplasmic and membrane proteins. Plays a role in the quality control of integral membrane proteins. In Mesoplasma florum (strain ATCC 33453 / NBRC 100688 / NCTC 11704 / L1) (Acholeplasma florum), this protein is ATP-dependent zinc metalloprotease FtsH.